We begin with the raw amino-acid sequence, 119 residues long: Large ribosomal subunit protein uL24 (119 aa).

It belongs to the universal ribosomal protein uL24 family. As to quaternary structure, part of the 50S ribosomal subunit.

In terms of biological role, one of two assembly initiator proteins, it binds directly to the 5'-end of the 23S rRNA, where it nucleates assembly of the 50S subunit. Its function is as follows. Located at the polypeptide exit tunnel on the outside of the subunit. This chain is Large ribosomal subunit protein uL24, found in Saccharolobus solfataricus (strain ATCC 35092 / DSM 1617 / JCM 11322 / P2) (Sulfolobus solfataricus).